Consider the following 237-residue polypeptide: Oligoribonuclease, mitochondrial (237 aa).

The transit peptide at Met-1–Gly-25 directs the protein to the mitochondrion. In terms of domain architecture, Exonuclease spans Met-43–Leu-207. Mg(2+) is bound by residues Asp-47 and Glu-49. At Ser-92 the chain carries Phosphoserine. Position 122 is a phosphotyrosine (Tyr-122). Asp-147 is a Mg(2+) binding site. Lys-173 is subject to N6-acetyllysine. His-194 is an active-site residue. Asp-199 contributes to the Mg(2+) binding site.

Belongs to the oligoribonuclease family. Homodimer. Homotetramer. Mn(2+) serves as cofactor. The cofactor is Mg(2+).

The protein localises to the mitochondrion intermembrane space. The protein resides in the mitochondrion matrix. It is found in the mitochondrion. Its subcellular location is the cytoplasm. It localises to the nucleus. Functionally, 3'-to-5'exoribonuclease that preferentially degrades DNA and RNA oligonucleotides composed of only two nucleotides. Binds and degrades longer oligonucleotides with a lower affinity. Plays dual roles in mitochondria, scavenging nanoRNAs (small RNA oligonucleotides of &lt;5 nucleotides) that are produced by the degradosome and clearing short RNAs that are generated by RNA processing. Essential for correct initiation of mitochondrial transcription, degrading mitochondrial RNA dinucleotides to prevent RNA-primed transcription at non-canonical sites in the mitochondrial genome. Essential for embryonic development. This chain is Oligoribonuclease, mitochondrial (REXO2), found in Bos taurus (Bovine).